Consider the following 689-residue polypeptide: Transketolase (689 aa).

His56 is a substrate binding site. Residues His96 and 144 to 146 (GNL) each bind thiamine diphosphate. Asp185 contributes to the Mg(2+) binding site. The thiamine diphosphate site is built by Gly186 and Asn215. Residues Asn215 and Ile217 each coordinate Mg(2+). His289, Arg380, and Ser407 together coordinate substrate. His289 contacts thiamine diphosphate. Catalysis depends on Glu434, which acts as the Proton donor. A thiamine diphosphate-binding site is contributed by Phe460. The substrate site is built by His484, Asp492, and Arg543.

This sequence belongs to the transketolase family. As to quaternary structure, homodimer. The cofactor is Mg(2+). Requires Ca(2+) as cofactor. Mn(2+) serves as cofactor. Co(2+) is required as a cofactor. It depends on thiamine diphosphate as a cofactor.

It catalyses the reaction D-sedoheptulose 7-phosphate + D-glyceraldehyde 3-phosphate = aldehydo-D-ribose 5-phosphate + D-xylulose 5-phosphate. Functionally, catalyzes the transfer of a two-carbon ketol group from a ketose donor to an aldose acceptor, via a covalent intermediate with the cofactor thiamine pyrophosphate. This chain is Transketolase (tkt), found in Aquifex aeolicus (strain VF5).